Here is a 194-residue protein sequence, read N- to C-terminus: Oligoribonuclease (194 aa).

The region spanning 11 to 174 (LIWIDLEMTG…SDVRDSINEL (164 aa)) is the Exonuclease domain. Tyrosine 132 is a catalytic residue.

The protein belongs to the oligoribonuclease family.

It is found in the cytoplasm. 3'-to-5' exoribonuclease specific for small oligoribonucleotides. The chain is Oligoribonuclease from Xanthomonas oryzae pv. oryzae (strain MAFF 311018).